A 196-amino-acid chain; its full sequence is Small ribosomal subunit protein uS4c (196 aa).

Residues 20-39 are disordered; that stretch reads GLTRKTPKSGSNLKKKFHSG. An S4 RNA-binding domain is found at 89–152; it reads MRLDNILFRL…RSKCLVQNSI (64 aa).

Belongs to the universal ribosomal protein uS4 family. Part of the 30S ribosomal subunit. Contacts protein S5. The interaction surface between S4 and S5 is involved in control of translational fidelity.

It is found in the plastid. The protein localises to the chloroplast. One of the primary rRNA binding proteins, it binds directly to 16S rRNA where it nucleates assembly of the body of the 30S subunit. Functionally, with S5 and S12 plays an important role in translational accuracy. This Dendrocalamus giganteus (Giant bamboo) protein is Small ribosomal subunit protein uS4c (rps4).